A 137-amino-acid chain; its full sequence is Basic phospholipase A2 3 (137 aa).

The signal sequence occupies residues 1-11 (LVAVCVSLLGA). Positions 12–19 (ANIPPQPL) are excised as a propeptide. Disulfide bonds link C30-C89, C44-C136, C46-C62, C61-C117, C68-C110, C78-C103, and C96-C108. Ca(2+)-binding residues include Y45, G47, and G49. The active site involves H65. Residue D66 participates in Ca(2+) binding. Residue D111 is part of the active site.

It belongs to the phospholipase A2 family. Group I subfamily. D49 sub-subfamily. As to quaternary structure, monomer, or homotrimer. Was firstly described as a trimer, but has been reinterpreted with the possibility of being a monomer. Ca(2+) serves as cofactor. In terms of tissue distribution, expressed by the venom gland.

Its subcellular location is the secreted. The catalysed reaction is a 1,2-diacyl-sn-glycero-3-phosphocholine + H2O = a 1-acyl-sn-glycero-3-phosphocholine + a fatty acid + H(+). Snake venom phospholipase A2 (PLA2) that shows anticoagulant and neurotoxic activities. PLA2 catalyzes the calcium-dependent hydrolysis of the 2-acyl groups in 3-sn-phosphoglycerides. This Bungarus caeruleus (Indian krait) protein is Basic phospholipase A2 3.